The sequence spans 178 residues: Cytochrome b6-f complex iron-sulfur subunit 2 (178 aa).

A helical transmembrane segment spans residues 17–36; sequence LLNFFTGAIVAATASAAIYP. A Rieske domain is found at 61-161; sequence GHPIPASQIL…VQVKDDYIWI (101 aa). 4 residues coordinate [2Fe-2S] cluster: Cys-107, His-109, Cys-125, and His-128. A disulfide bridge links Cys-112 with Cys-127.

It belongs to the Rieske iron-sulfur protein family. As to quaternary structure, the 4 large subunits of the cytochrome b6-f complex are cytochrome b6, subunit IV (17 kDa polypeptide, PetD), cytochrome f and the Rieske protein, while the 4 small subunits are PetG, PetL, PetM and PetN. The complex functions as a dimer. [2Fe-2S] cluster is required as a cofactor.

It localises to the cellular thylakoid membrane. It carries out the reaction 2 oxidized [plastocyanin] + a plastoquinol + 2 H(+)(in) = 2 reduced [plastocyanin] + a plastoquinone + 4 H(+)(out). In terms of biological role, component of the cytochrome b6-f complex, which mediates electron transfer between photosystem II (PSII) and photosystem I (PSI), cyclic electron flow around PSI, and state transitions. This is Cytochrome b6-f complex iron-sulfur subunit 2 from Trichormus variabilis (strain ATCC 29413 / PCC 7937) (Anabaena variabilis).